We begin with the raw amino-acid sequence, 41 residues long: uncharacterized protein (41 aa).

This is an uncharacterized protein from Bacillus subtilis (strain 168).